An 855-amino-acid polypeptide reads, in one-letter code: Homeobox-leucine zipper protein HOX33 (855 aa).

The tract at residues 1–21 is disordered; that stretch reads MAAAAVGGRGERLSSSSPTAA. A DNA-binding region (homeobox) is located at residues 26–89; it reads DAGKYVRYTP…NRRCREKQRK (64 aa). Residues 84-126 adopt a coiled-coil conformation; it reads REKQRKEASRLQTVNRKLNAMNKLLMEENDRLQKQVSRLVYEN. The START domain maps to 168–390; the sequence is DANNPAGLLA…LRHIRQIAHE (223 aa).

The protein belongs to the HD-ZIP homeobox family. Class III subfamily. As to expression, expressed in seedlings, roots, stems, leaf sheaths and blades and panicles.

It is found in the nucleus. Probable transcription factor. This is Homeobox-leucine zipper protein HOX33 (HOX33) from Oryza sativa subsp. indica (Rice).